The primary structure comprises 467 residues: Cruzipain (467 aa).

Positions 1–18 are cleaved as a signal peptide; that stretch reads MSGWARALLLAAVLVVMA. The propeptide at 19 to 122 is activation peptide; sequence CLVPAATASL…RVPVKVEVVG (104 aa). 3 cysteine pairs are disulfide-bonded: Cys-144/Cys-185, Cys-178/Cys-223, and Cys-277/Cys-325. Cys-147 is an active-site residue. The N-linked (GlcNAc...) asparagine glycan is linked to Asn-169. His-284 is a catalytic residue. Asn-292 carries N-linked (GlcNAc...) asparagine glycosylation. The active site involves Asn-304. Residues 333 to 355 are disordered; sequence SAVVGGPGPTPEPTTTTTTSAPG. Residues 345–354 show a composition bias toward low complexity; that stretch reads PTTTTTTSAP. The N-linked (GlcNAc...) asparagine glycan is linked to Asn-377.

The protein belongs to the peptidase C1 family.

It catalyses the reaction Broad endopeptidase specificity similar to that of cathepsin L.. With respect to regulation, strongly inhibited by E-64 (L-trans-epoxysuccinylleucylamido(4-guanidino)butane), Leupeptin, and N-alpha-p-tosyl-L-lysine chloromethyl ketone. In terms of biological role, hydrolyzes chromogenic peptides at the carboxyl Arg or Lys; requires at least one more amino acid, preferably Arg, Phe, Val or Leu, between the terminal Arg or Lys and the amino-blocking group. The cysteine protease may play an important role in the development and differentiation of the parasites at several stages of their life cycle. The chain is Cruzipain from Trypanosoma cruzi.